Consider the following 208-residue polypeptide: Type 4 adapter protein LvgA (208 aa).

The T4BSS is a complex nanomachine composed of several subcomplexes. This subunit is part of the Type IV Coupling Complex (T4CC), a subcomplex composed of the DotLMNYZ core and the IcmSW-LvgA adapter subunits, linked by the C-terminal tail of DotL. Interacts with DotL, IcmS and IcmW. Interacts with various effector proteins, including VpdB, SetA, PieA and SidH.

The protein localises to the cytoplasm. In terms of biological role, component of the Dot/Icm type IVB secretion system (T4BSS), which is used to inject bacterial effector proteins into eukaryotic host cells. Part of a subcomplex which recruits effector proteins and delivers them to the core transmembrane subcomplex. Is a critical subunit for binding a subset of effector proteins. Recognizes more than one type of binding motif. May be a critical factor that confers host specificity. The polypeptide is Type 4 adapter protein LvgA (Legionella pneumophila subsp. pneumophila (strain Philadelphia 1 / ATCC 33152 / DSM 7513)).